The primary structure comprises 291 residues: MASGGQFPPQKQESQPGKEHLMDPSPQHASPHYKPANKLQGKVALVTGGDSGIGRSVCYHFALEGATVAFTFVKGHEDKDANETLELLRKAKSSDAKDPIAIAADLGFDDNCKKVVDQVVNAFGSIDVLVNNAAEQYKASTVEDIDEERLERVFRTNIFAYFFMARHALKHMREGSTIINTTSINAYKGNAKLLDYTATKGAIVAFTRGLSLQLISKGIRVNGVAPGPVWTPLIPSSFDEEEVKQFGSEVPMKRAGQPYEIATAYVFLASCDSSYYSGQVLHPNGGAIVNG.

Positions 1-35 are disordered; sequence MASGGQFPPQKQESQPGKEHLMDPSPQHASPHYKP. 45 to 69 contacts NAD(+); sequence LVTGGDSGIGRSVCYHFALEGATVA. Ser183 is a binding site for substrate. Tyr196 serves as the catalytic Proton acceptor.

Belongs to the short-chain dehydrogenases/reductases (SDR) family. Expressed in embryogenic cells, somatic embryos and seeds in the later stages of development, but not in non-embryogenic cells and mature leaves.

Functionally, may act as a short alcohol-polyol-sugar dehydrogenase possibly related to carbohydrate metabolism and the acquisition of desiccation tolerance. May also be involved in signal transduction. This is Glucose and ribitol dehydrogenase (CAISE5) from Daucus carota (Wild carrot).